The chain runs to 154 residues: Lymphocyte antigen 6K (154 aa).

The first 20 residues, 1-20 (MAFLVALLVVLGLQLVQSNA), serve as a signal peptide directing secretion. Residues 21–117 (LTCHVCEAQN…NGEGPPTDQL (97 aa)) form the UPAR/Ly6 domain. G123 carries GPI-anchor amidated glycine lipidation. A propeptide spans 124–154 (KASGRRHRYIELLLTGFMVLTANGLSALCLL) (removed in mature form).

Interacts with ADAM3 and TEX101. As to expression, strongly expressed in testes and weakly expressed in the epididymis, ovary, and uterus. Expressed in testicular germ cells (TGCs). Expressed in the testicular seminiferous tubules, in spermatocytes, spermatids, and testicular spermatozoa.

The protein localises to the secreted. It is found in the cytoplasm. Its subcellular location is the cell membrane. It localises to the cytoplasmic vesicle. The protein resides in the secretory vesicle. The protein localises to the acrosome. It is found in the membrane raft. Required for sperm migration into the oviduct and male fertility by controlling binding of sperm to zona pellucida. May play a role in cell growth. The chain is Lymphocyte antigen 6K from Mus musculus (Mouse).